The following is a 346-amino-acid chain: Histidinol-phosphate aminotransferase (346 aa).

Lysine 209 carries the N6-(pyridoxal phosphate)lysine modification.

Belongs to the class-II pyridoxal-phosphate-dependent aminotransferase family. Histidinol-phosphate aminotransferase subfamily. As to quaternary structure, homodimer. Requires pyridoxal 5'-phosphate as cofactor.

It catalyses the reaction L-histidinol phosphate + 2-oxoglutarate = 3-(imidazol-4-yl)-2-oxopropyl phosphate + L-glutamate. It functions in the pathway amino-acid biosynthesis; L-histidine biosynthesis; L-histidine from 5-phospho-alpha-D-ribose 1-diphosphate: step 7/9. The polypeptide is Histidinol-phosphate aminotransferase (Vibrio cholerae serotype O1 (strain ATCC 39541 / Classical Ogawa 395 / O395)).